Consider the following 302-residue polypeptide: Acetylglutamate kinase (302 aa).

Residues 68 to 69, Arg90, and Asn195 each bind substrate; that span reads GG.

This sequence belongs to the acetylglutamate kinase family. ArgB subfamily.

It is found in the cytoplasm. The enzyme catalyses N-acetyl-L-glutamate + ATP = N-acetyl-L-glutamyl 5-phosphate + ADP. It participates in amino-acid biosynthesis; L-arginine biosynthesis; N(2)-acetyl-L-ornithine from L-glutamate: step 2/4. Catalyzes the ATP-dependent phosphorylation of N-acetyl-L-glutamate. This chain is Acetylglutamate kinase, found in Marinomonas sp. (strain MWYL1).